Consider the following 350-residue polypeptide: Phosphotriesterase-related protein (350 aa).

Residues H22, H24, E169, H201, H230, and D298 each coordinate a divalent metal cation.

Belongs to the metallo-dependent hydrolases superfamily. Phosphotriesterase family. It depends on a divalent metal cation as a cofactor.

The sequence is that of Phosphotriesterase-related protein from Drosophila grimshawi (Hawaiian fruit fly).